A 263-amino-acid chain; its full sequence is 4-hydroxy-2-oxo-heptane-1,7-dioate aldolase (263 aa).

Histidine 45 functions as the Proton acceptor in the catalytic mechanism. Glutamine 147 provides a ligand contact to substrate. Glutamate 149 is a binding site for a divalent metal cation. Positions 174 and 175 each coordinate substrate. An a divalent metal cation-binding site is contributed by aspartate 175.

The protein belongs to the HpcH/HpaI aldolase family. As to quaternary structure, homohexamer; trimer of dimers. Requires a divalent metal cation as cofactor.

The catalysed reaction is 4-hydroxy-2-oxoheptanedioate = succinate semialdehyde + pyruvate. It participates in aromatic compound metabolism; 4-hydroxyphenylacetate degradation; pyruvate and succinate semialdehyde from 4-hydroxyphenylacetate: step 7/7. In terms of biological role, catalyzes the reversible retro-aldol cleavage of 4-hydroxy-2-ketoheptane-1,7-dioate (HKHD) to pyruvate and succinic semialdehyde. The chain is 4-hydroxy-2-oxo-heptane-1,7-dioate aldolase from Salmonella heidelberg (strain SL476).